The sequence spans 926 residues: MALANEIMGSRLIFERSSSLASPFHSRFSIKKKTQRTQFSINPFDPRPMRAVNSSGVVAAISEDLVKTLRISTVGRKQEKEEEEEKSVKFKVRAVATVRNKNKEDFKETLVKHLDAFTDKIGRNVVLELMSTQVDPKTNEPKKSKAAVLKDWSKKSNSKAERVHYTAEFTVDSAFGSPGAITVTNKHQKEFFLESITIEGFACGPVHFPCNSWVQSQKDHPSKRILFTNQPYLPSETPSGLRTLREKELENLRGNGKGERKLSDRIYDYDVYNDIGNPDISRELARPTLGGREFPYPRRCRTGRSSTDTDMMSERRVEKPLPMYVPRDEQFEESKQNTFAACRLKAVLHNLIPSLKASILAEDFANFGEIDSLYKEGLLLKLGFQDDMFKKFPLPKIVTTLQKSSEGLLRYDTPKIVSKDKYAWLRDDEFARQAIAGINPVNIERVTSYPPVSNLDPEIYGPGLHSALTEDHIIGQLDGLTVQQALETNRLFMVDYHDIYLPFLDRINALDGRKAYATRTILFLTRLGTLKPIAIELSLPSQSSSNQKSKRVVTPPVDATSNWMWQLAKAHVGSNDAGVHQLVNHWLRTHACLEPFILAAHRQLSAMHPIFKLLDPHMRYTLEINAVARQTLISADGVIESCFTAGQYGLEISSAAYKNKWRFDMEGLPADLIRRGMAVPDPTQPHGLKLLVEDYPYANDGLLLWSAIQTWVRTYVERYYANSNLIQTDTELQAWYSESINVGHADHRDAEWWPKLSTVEDLVSVITTIIWLASAQHAALNFGQYPYGGYVPNRPPLMRRLIPDESDPEFTSFIEDPQKYFFSSMPSLLQTTKFMAVVDTLSTHSPDEEYIGERQQPSIWTGDAEIVDAFYGFSAEIGRIEKEIDKRNRDPSRRNRCGAGVLPYELMAPSSEPGVTCRGVPNSVSI.

Residues 1–58 (MALANEIMGSRLIFERSSSLASPFHSRFSIKKKTQRTQFSINPFDPRPMRAVNSSGVV) constitute a chloroplast transit peptide. The PLAT domain maps to 106–228 (FKETLVKHLD…DHPSKRILFT (123 aa)). In terms of domain architecture, Lipoxygenase spans 231–926 (PYLPSETPSG…CRGVPNSVSI (696 aa)). Positions 585, 590, 777, 781, and 926 each coordinate Fe cation.

Belongs to the lipoxygenase family. The cofactor is Fe cation. As to expression, expressed in leaves.

Its subcellular location is the plastid. The protein resides in the chloroplast. The enzyme catalyses (9Z,12Z)-octadecadienoate + O2 = (13S)-hydroperoxy-(9Z,11E)-octadecadienoate. It catalyses the reaction (9Z,12Z,15Z)-octadecatrienoate + O2 = (13S)-hydroperoxy-(9Z,11E,15Z)-octadecatrienoate. It functions in the pathway lipid metabolism; oxylipin biosynthesis. In terms of biological role, plant lipoxygenases may be involved in a number of diverse aspects of plant physiology including growth and development, pest resistance, and senescence or responses to wounding. Catalyzes the hydroperoxidation of lipids containing a cis,cis-1,4-pentadiene structure. 13S-lipoxygenase that can use linolenic acid as substrates. The chain is Lipoxygenase 4, chloroplastic (LOX4) from Arabidopsis thaliana (Mouse-ear cress).